The primary structure comprises 260 residues: Mitochondrial import inner membrane translocase subunit Tim29 (260 aa).

A mitochondrion-targeting transit peptide spans 1 to 31; sequence MAAAALRRFWSRRRAEAGDAVVAKPGVWARL. Residues 32-59 are Mitochondrial matrix-facing; sequence GSWARALLRDYAEACRDASAEARARPGR. Residues 60-77 form a helical membrane-spanning segment; it reads AAVYVGLLGGAAACFTLA. The Mitochondrial intermembrane portion of the chain corresponds to 78–260; it reads PSEGAFEEAL…HSLVQAEAPR (183 aa).

Component of the TIM22 complex, which core is composed of TIMM22, associated with TIMM10 (TIMM10A and/or TIMM10B), TIMM9, AGK and TIMM29. Interacts with TIMM10B; the interaction is direct. Interacts with TOMM40; linking the TIM22 complex to the TOM complex. Interacts with TIMM22 (when oxidized); the interaction is direct.

Its subcellular location is the mitochondrion inner membrane. Its function is as follows. Component of the TIM22 complex, a complex that mediates the import and insertion of multi-pass transmembrane proteins into the mitochondrial inner membrane. The TIM22 complex forms a twin-pore translocase that uses the membrane potential as the external driving force. Required for the stability of the TIM22 complex and functions in the assembly of the TIMM22 protein into the TIM22 complex. May facilitate cooperation between TIM22 and TOM complexes by interacting with TOMM40. This chain is Mitochondrial import inner membrane translocase subunit Tim29, found in Homo sapiens (Human).